The primary structure comprises 562 residues: Glucan 1,3-beta-glucosidase 2 (562 aa).

The N-terminal stretch at Met-1 to Gly-22 is a signal peptide. 7 N-linked (GlcNAc...) asparagine glycosylation sites follow: Asn-50, Asn-77, Asn-86, Asn-90, Asn-106, Asn-157, and Asn-220. Glu-254 serves as the catalytic Proton donor. N-linked (GlcNAc...) asparagine glycans are attached at residues Asn-281, Asn-285, Asn-310, Asn-317, and Asn-322. Residue His-334 is the Nucleophile of the active site. N-linked (GlcNAc...) asparagine glycans are attached at residues Asn-401, Asn-480, and Asn-539.

This sequence belongs to the glycosyl hydrolase 5 (cellulase A) family.

The protein resides in the cell membrane. The catalysed reaction is Successive hydrolysis of beta-D-glucose units from the non-reducing ends of (1-&gt;3)-beta-D-glucans, releasing alpha-glucose.. The sequence is that of Glucan 1,3-beta-glucosidase 2 (EXG2) from Saccharomyces cerevisiae (strain ATCC 204508 / S288c) (Baker's yeast).